Reading from the N-terminus, the 410-residue chain is LL-diaminopimelate aminotransferase (410 aa).

2 residues coordinate substrate: Y15 and G42. Pyridoxal 5'-phosphate is bound by residues Y72, 108 to 109 (SK), Y132, N187, Y218, and 246 to 248 (SFS). Substrate is bound by residues K109, Y132, and N187. At K249 the chain carries N6-(pyridoxal phosphate)lysine. Residues R257 and N292 each contribute to the pyridoxal 5'-phosphate site. Substrate-binding residues include N292 and R388.

This sequence belongs to the class-I pyridoxal-phosphate-dependent aminotransferase family. LL-diaminopimelate aminotransferase subfamily. In terms of assembly, homodimer. It depends on pyridoxal 5'-phosphate as a cofactor.

It catalyses the reaction (2S,6S)-2,6-diaminopimelate + 2-oxoglutarate = (S)-2,3,4,5-tetrahydrodipicolinate + L-glutamate + H2O + H(+). Its pathway is amino-acid biosynthesis; L-lysine biosynthesis via DAP pathway; LL-2,6-diaminopimelate from (S)-tetrahydrodipicolinate (aminotransferase route): step 1/1. Involved in the synthesis of meso-diaminopimelate (m-DAP or DL-DAP), required for both lysine and peptidoglycan biosynthesis. Catalyzes the direct conversion of tetrahydrodipicolinate to LL-diaminopimelate. This chain is LL-diaminopimelate aminotransferase, found in Thermosynechococcus vestitus (strain NIES-2133 / IAM M-273 / BP-1).